Consider the following 380-residue polypeptide: 3-dehydroquinate synthase (380 aa).

NAD(+) contacts are provided by residues 100-104 (GAASD), 124-125 (TT), Lys137, and Lys146. Zn(2+)-binding residues include Glu179, His251, and His267.

It belongs to the sugar phosphate cyclases superfamily. Dehydroquinate synthase family. The cofactor is NAD(+). Co(2+) is required as a cofactor. It depends on Zn(2+) as a cofactor.

It localises to the cytoplasm. It carries out the reaction 7-phospho-2-dehydro-3-deoxy-D-arabino-heptonate = 3-dehydroquinate + phosphate. It functions in the pathway metabolic intermediate biosynthesis; chorismate biosynthesis; chorismate from D-erythrose 4-phosphate and phosphoenolpyruvate: step 2/7. Its function is as follows. Catalyzes the conversion of 3-deoxy-D-arabino-heptulosonate 7-phosphate (DAHP) to dehydroquinate (DHQ). The chain is 3-dehydroquinate synthase from Tropheryma whipplei (strain TW08/27) (Whipple's bacillus).